The chain runs to 599 residues: Vitamin B12-dependent ribonucleotide reductase (599 aa).

193–197 is a substrate binding site; it reads PTGTI. Positions 519-555 are disordered; sequence LAQSAPRQAGPAKAATTAPAAKAQEPAAAPSPKQAHN. Low complexity predominate over residues 526–553; it reads QAGPAKAATTAPAAKAQEPAAAPSPKQA.

The protein belongs to the ribonucleoside diphosphate reductase class-2 family. Requires adenosylcob(III)alamin as cofactor.

The catalysed reaction is a 2'-deoxyribonucleoside 5'-diphosphate + [thioredoxin]-disulfide + H2O = a ribonucleoside 5'-diphosphate + [thioredoxin]-dithiol. Its function is as follows. Catalyzes the reduction of ribonucleotides to deoxyribonucleotides. May function to provide a pool of deoxyribonucleotide precursors for DNA repair during oxygen limitation and/or for immediate growth after restoration of oxygen. This chain is Vitamin B12-dependent ribonucleotide reductase (nrdJ), found in Streptantibioticus cattleyicolor (Streptomyces cattleya).